A 967-amino-acid polypeptide reads, in one-letter code: Kinesin-like protein KIF28P (967 aa).

The Kinesin motor domain maps to 7–355 (DSVKAVRVRP…LRYAERERKI (349 aa)). ATP is bound at residue 111–118 (GQTGSGKS). In terms of domain architecture, FHA spans 410–472 (APCPRPALSP…LQHLDRLILG (63 aa)). A coiled-coil region spans residues 822–851 (NQIPELYLKLLKLEQETEPLRNINRALREE).

This sequence belongs to the TRAFAC class myosin-kinesin ATPase superfamily. Kinesin family.

It localises to the mitochondrion membrane. Microtubule-dependent motor protein required for mitochondrion morphology and transport of mitochondria in neuronal cells. The sequence is that of Kinesin-like protein KIF28P (KIF28P) from Homo sapiens (Human).